A 218-amino-acid polypeptide reads, in one-letter code: Glutathione S-transferase Y1 (218 aa).

One can recognise a GST N-terminal domain in the interval 2-88 (PMILGYWNVR…YIARKHNLCG (87 aa)). Residues 7–8 (YW), 46–50 (WLNEK), 59–60 (NL), and 72–73 (QS) each bind glutathione. One can recognise a GST C-terminal domain in the interval 90-208 (TEEERIRVDI…KTSRFLRRPI (119 aa)). Tyr116 is a binding site for substrate.

Belongs to the GST superfamily. Mu family. In terms of assembly, homodimer.

It localises to the cytoplasm. It catalyses the reaction RX + glutathione = an S-substituted glutathione + a halide anion + H(+). Its function is as follows. Conjugation of reduced glutathione to a wide number of exogenous and endogenous hydrophobic electrophiles. This Cricetulus longicaudatus (Long-tailed dwarf hamster) protein is Glutathione S-transferase Y1.